The chain runs to 123 residues: Probable histone H2B 3 (123 aa).

Positions 1–31 are disordered; sequence MAPPKPSAKGAKKAAKTVSKPKDGKKRKHAR. The O-linked (GlcNAc) serine glycan is linked to Ser110. Residue Lys118 forms a Glycyl lysine isopeptide (Lys-Gly) (interchain with G-Cter in ubiquitin) linkage.

The protein belongs to the histone H2B family. The nucleosome is a histone octamer containing two molecules each of H2A, H2B, H3 and H4 assembled in one H3-H4 heterotetramer and two H2A-H2B heterodimers. The octamer wraps approximately 147 bp of DNA. Monoubiquitination of Lys-118 gives a specific tag for epigenetic transcriptional activation and is also prerequisite for histone H3 'Lys-4' and 'Lys-79' methylation. In terms of processing, glcNAcylation at Ser-110 promotes monoubiquitination of Lys-118. It fluctuates in response to extracellular glucose, and associates with transcribed genes.

The protein localises to the nucleus. The protein resides in the chromosome. Core component of nucleosome. Nucleosomes wrap and compact DNA into chromatin, limiting DNA accessibility to the cellular machineries which require DNA as a template. Histones thereby play a central role in transcription regulation, DNA repair, DNA replication and chromosomal stability. DNA accessibility is regulated via a complex set of post-translational modifications of histones, also called histone code, and nucleosome remodeling. The sequence is that of Probable histone H2B 3 (his-41) from Caenorhabditis elegans.